The chain runs to 314 residues: Mitochondrial thiamine pyrophosphate carrier 1 (314 aa).

The next 6 membrane-spanning stretches (helical) occupy residues valine 14–alanine 30, leucine 84–phenylalanine 100, leucine 116–leucine 136, glycine 170–phenylalanine 186, serine 217–leucine 233, and glycine 285–tryptophan 302. 3 Solcar repeats span residues valine 14 to tyrosine 103, glutamate 110 to tyrosine 195, and glutamate 210 to tyrosine 310.

Belongs to the mitochondrial carrier (TC 2.A.29) family.

Its subcellular location is the mitochondrion inner membrane. Its function is as follows. Mitochondrial transporter that mediates uptake of thiamine pyrophosphate (ThPP) into mitochondria. In Saccharomyces cerevisiae (strain YJM789) (Baker's yeast), this protein is Mitochondrial thiamine pyrophosphate carrier 1 (TPC1).